Reading from the N-terminus, the 144-residue chain is Cytochrome c oxidase subunit 4 isoform 1, mitochondrial (144 aa).

The Mitochondrial matrix segment spans residues 1–73; sequence SVVKSEDFSL…SFAEMNRGSN (73 aa). Position 4 is an N6-acetyllysine; alternate (Lys-4). Lys-4 carries the post-translational modification N6-succinyllysine; alternate. Position 28 is an N6-acetyllysine (Lys-28). Phosphoserine is present on residues Ser-31 and Ser-33. Residue Lys-35 is modified to N6-acetyllysine; alternate. Lys-35 is modified (N6-succinyllysine; alternate). At Lys-42 the chain carries N6-acetyllysine. Residues 74–99 form a helical membrane-spanning segment; it reads EWKTVVGGAMFFIGFTALVIMWQKHY. The Mitochondrial intermembrane segment spans residues 100 to 144; that stretch reads VYGPLPQSFDKEWVAKQTKRMLDMKVNPIQGLASKWDYEKNEWKK.

Belongs to the cytochrome c oxidase IV family. In terms of assembly, component of the cytochrome c oxidase (complex IV, CIV), a multisubunit enzyme composed of 14 subunits. The complex is composed of a catalytic core of 3 subunits MT-CO1, MT-CO2 and MT-CO3, encoded in the mitochondrial DNA, and 11 supernumerary subunits COX4I, COX5A, COX5B, COX6A, COX6B, COX6C, COX7A, COX7B, COX7C, COX8 and NDUFA4, which are encoded in the nuclear genome. The complex exists as a monomer or a dimer and forms supercomplexes (SCs) in the inner mitochondrial membrane with NADH-ubiquinone oxidoreductase (complex I, CI) and ubiquinol-cytochrome c oxidoreductase (cytochrome b-c1 complex, complex III, CIII), resulting in different assemblies (supercomplex SCI(1)III(2)IV(1) and megacomplex MCI(2)III(2)IV(2)). Interacts with PHB2; the interaction decreases in absence of SPHK2. Interacts with AFG1L. Interacts with ABCB7; this interaction allows the regulation of cellular iron homeostasis and cellular reactive oxygen species (ROS) levels in cardiomyocytes. Interacts with FLVCR2; this interaction occurs in the absence of heme and is disrupted upon heme binding. Interacts with IRGC.

The protein localises to the mitochondrion inner membrane. It functions in the pathway energy metabolism; oxidative phosphorylation. In terms of biological role, component of the cytochrome c oxidase, the last enzyme in the mitochondrial electron transport chain which drives oxidative phosphorylation. The respiratory chain contains 3 multisubunit complexes succinate dehydrogenase (complex II, CII), ubiquinol-cytochrome c oxidoreductase (cytochrome b-c1 complex, complex III, CIII) and cytochrome c oxidase (complex IV, CIV), that cooperate to transfer electrons derived from NADH and succinate to molecular oxygen, creating an electrochemical gradient over the inner membrane that drives transmembrane transport and the ATP synthase. Cytochrome c oxidase is the component of the respiratory chain that catalyzes the reduction of oxygen to water. Electrons originating from reduced cytochrome c in the intermembrane space (IMS) are transferred via the dinuclear copper A center (CU(A)) of subunit 2 and heme A of subunit 1 to the active site in subunit 1, a binuclear center (BNC) formed by heme A3 and copper B (CU(B)). The BNC reduces molecular oxygen to 2 water molecules using 4 electrons from cytochrome c in the IMS and 4 protons from the mitochondrial matrix. In Pan troglodytes (Chimpanzee), this protein is Cytochrome c oxidase subunit 4 isoform 1, mitochondrial (COX4I1).